The chain runs to 245 residues: 1-(5-phosphoribosyl)-5-[(5-phosphoribosylamino)methylideneamino] imidazole-4-carboxamide isomerase (245 aa).

Asp-7 serves as the catalytic Proton acceptor. The active-site Proton donor is the Asp-129.

This sequence belongs to the HisA/HisF family.

Its subcellular location is the cytoplasm. It carries out the reaction 1-(5-phospho-beta-D-ribosyl)-5-[(5-phospho-beta-D-ribosylamino)methylideneamino]imidazole-4-carboxamide = 5-[(5-phospho-1-deoxy-D-ribulos-1-ylimino)methylamino]-1-(5-phospho-beta-D-ribosyl)imidazole-4-carboxamide. It participates in amino-acid biosynthesis; L-histidine biosynthesis; L-histidine from 5-phospho-alpha-D-ribose 1-diphosphate: step 4/9. The sequence is that of 1-(5-phosphoribosyl)-5-[(5-phosphoribosylamino)methylideneamino] imidazole-4-carboxamide isomerase from Escherichia coli (strain SMS-3-5 / SECEC).